Reading from the N-terminus, the 694-residue chain is Elongation factor G (694 aa).

In terms of domain architecture, tr-type G spans 8 to 282 (KDYRNIGIMA…AVIDYLPSPV (275 aa)). Residues 17-24 (AHIDAGKT), 81-85 (DTPGH), and 135-138 (NKMD) contribute to the GTP site.

Belongs to the TRAFAC class translation factor GTPase superfamily. Classic translation factor GTPase family. EF-G/EF-2 subfamily.

It is found in the cytoplasm. Catalyzes the GTP-dependent ribosomal translocation step during translation elongation. During this step, the ribosome changes from the pre-translocational (PRE) to the post-translocational (POST) state as the newly formed A-site-bound peptidyl-tRNA and P-site-bound deacylated tRNA move to the P and E sites, respectively. Catalyzes the coordinated movement of the two tRNA molecules, the mRNA and conformational changes in the ribosome. In Mesomycoplasma hyopneumoniae (strain J / ATCC 25934 / NCTC 10110) (Mycoplasma hyopneumoniae), this protein is Elongation factor G.